We begin with the raw amino-acid sequence, 318 residues long: 4-hydroxy-3-methylbut-2-enyl diphosphate reductase (318 aa).

Cysteine 12 serves as a coordination point for [4Fe-4S] cluster. (2E)-4-hydroxy-3-methylbut-2-enyl diphosphate is bound by residues histidine 41 and histidine 74. Dimethylallyl diphosphate contacts are provided by histidine 41 and histidine 74. Histidine 41 and histidine 74 together coordinate isopentenyl diphosphate. A [4Fe-4S] cluster-binding site is contributed by cysteine 96. Histidine 124 serves as a coordination point for (2E)-4-hydroxy-3-methylbut-2-enyl diphosphate. Histidine 124 contacts dimethylallyl diphosphate. Isopentenyl diphosphate is bound at residue histidine 124. The active-site Proton donor is the glutamate 126. Threonine 167 is a binding site for (2E)-4-hydroxy-3-methylbut-2-enyl diphosphate. Cysteine 197 contributes to the [4Fe-4S] cluster binding site. Residues serine 225, serine 226, asparagine 227, and serine 269 each coordinate (2E)-4-hydroxy-3-methylbut-2-enyl diphosphate. Residues serine 225, serine 226, asparagine 227, and serine 269 each contribute to the dimethylallyl diphosphate site. Serine 225, serine 226, asparagine 227, and serine 269 together coordinate isopentenyl diphosphate.

The protein belongs to the IspH family. The cofactor is [4Fe-4S] cluster.

It catalyses the reaction isopentenyl diphosphate + 2 oxidized [2Fe-2S]-[ferredoxin] + H2O = (2E)-4-hydroxy-3-methylbut-2-enyl diphosphate + 2 reduced [2Fe-2S]-[ferredoxin] + 2 H(+). The enzyme catalyses dimethylallyl diphosphate + 2 oxidized [2Fe-2S]-[ferredoxin] + H2O = (2E)-4-hydroxy-3-methylbut-2-enyl diphosphate + 2 reduced [2Fe-2S]-[ferredoxin] + 2 H(+). It participates in isoprenoid biosynthesis; dimethylallyl diphosphate biosynthesis; dimethylallyl diphosphate from (2E)-4-hydroxy-3-methylbutenyl diphosphate: step 1/1. Its pathway is isoprenoid biosynthesis; isopentenyl diphosphate biosynthesis via DXP pathway; isopentenyl diphosphate from 1-deoxy-D-xylulose 5-phosphate: step 6/6. In terms of biological role, catalyzes the conversion of 1-hydroxy-2-methyl-2-(E)-butenyl 4-diphosphate (HMBPP) into a mixture of isopentenyl diphosphate (IPP) and dimethylallyl diphosphate (DMAPP). Acts in the terminal step of the DOXP/MEP pathway for isoprenoid precursor biosynthesis. The chain is 4-hydroxy-3-methylbut-2-enyl diphosphate reductase from Francisella philomiragia subsp. philomiragia (strain ATCC 25017 / CCUG 19701 / FSC 153 / O#319-036).